The primary structure comprises 230 residues: Orotidine 5'-phosphate decarboxylase (230 aa).

Residues Asp-10, Lys-32, 59-68, Thr-118, Arg-179, Gln-188, Gly-208, and Arg-209 contribute to the substrate site; that span reads DLKLHDIPNT. Residue Lys-61 is the Proton donor of the active site.

The protein belongs to the OMP decarboxylase family. Type 1 subfamily. As to quaternary structure, homodimer.

The enzyme catalyses orotidine 5'-phosphate + H(+) = UMP + CO2. Its pathway is pyrimidine metabolism; UMP biosynthesis via de novo pathway; UMP from orotate: step 2/2. Its function is as follows. Catalyzes the decarboxylation of orotidine 5'-monophosphate (OMP) to uridine 5'-monophosphate (UMP). The protein is Orotidine 5'-phosphate decarboxylase of Opitutus terrae (strain DSM 11246 / JCM 15787 / PB90-1).